A 508-amino-acid chain; its full sequence is Anaerobic nitric oxide reductase transcription regulator NorR (508 aa).

A 4-aspartylphosphate modification is found at D56. One can recognise a Sigma-54 factor interaction domain in the interval 186–415 (MIGQSPAMAR…LEHAIHRAAV (230 aa)). Residues 214–221 (GETGVGKE) and 277–286 (ADQGTLFLDE) contribute to the ATP site. A DNA-binding region (H-T-H motif) is located at residues 483-502 (WAATARALELDSGNLHRLAK).

It participates in nitrogen metabolism; nitric oxide reduction. Functionally, required for the expression of anaerobic nitric oxide (NO) reductase, acts as a transcriptional activator for at least the norVW operon. Activation also requires sigma-54. This Aeromonas hydrophila subsp. hydrophila (strain ATCC 7966 / DSM 30187 / BCRC 13018 / CCUG 14551 / JCM 1027 / KCTC 2358 / NCIMB 9240 / NCTC 8049) protein is Anaerobic nitric oxide reductase transcription regulator NorR.